Reading from the N-terminus, the 200-residue chain is Lipopolysaccharide core heptose(II)-phosphate phosphatase (200 aa).

The first 25 residues, 1-25, serve as a signal peptide directing secretion; that stretch reads MLAFCRSSLKSKKYFIILLALAAIA.

This sequence belongs to the phosphoglycerate mutase family. Ais subfamily.

It is found in the periplasm. It functions in the pathway bacterial outer membrane biogenesis; lipopolysaccharide metabolism. In terms of biological role, catalyzes the dephosphorylation of heptose(II) of the outer membrane lipopolysaccharide core. The protein is Lipopolysaccharide core heptose(II)-phosphate phosphatase of Escherichia coli O17:K52:H18 (strain UMN026 / ExPEC).